Reading from the N-terminus, the 94-residue chain is Integration host factor subunit beta (94 aa).

This sequence belongs to the bacterial histone-like protein family. Heterodimer of an alpha and a beta chain.

In terms of biological role, this protein is one of the two subunits of integration host factor, a specific DNA-binding protein that functions in genetic recombination as well as in transcriptional and translational control. The protein is Integration host factor subunit beta of Escherichia coli (strain UTI89 / UPEC).